The chain runs to 391 residues: Ribonucleoside-diphosphate reductase small chain (391 aa).

Asp-135, Glu-166, and His-169 together coordinate Fe cation. The active site involves Tyr-173. Glu-229, Glu-263, and His-266 together coordinate Fe cation.

The protein belongs to the ribonucleoside diphosphate reductase small chain family. As to quaternary structure, heterodimer of a large and a small subunit. Fe cation is required as a cofactor.

It localises to the nucleus. Its subcellular location is the cytoplasm. The catalysed reaction is a 2'-deoxyribonucleoside 5'-diphosphate + [thioredoxin]-disulfide + H2O = a ribonucleoside 5'-diphosphate + [thioredoxin]-dithiol. In terms of biological role, provides the precursors necessary for DNA synthesis. Catalyzes the biosynthesis of deoxyribonucleotides from the corresponding ribonucleotides. The chain is Ribonucleoside-diphosphate reductase small chain (suc22) from Schizosaccharomyces pombe (strain 972 / ATCC 24843) (Fission yeast).